Reading from the N-terminus, the 202-residue chain is Imidazoleglycerol-phosphate dehydratase (202 aa).

Belongs to the imidazoleglycerol-phosphate dehydratase family.

Its subcellular location is the cytoplasm. The enzyme catalyses D-erythro-1-(imidazol-4-yl)glycerol 3-phosphate = 3-(imidazol-4-yl)-2-oxopropyl phosphate + H2O. The protein operates within amino-acid biosynthesis; L-histidine biosynthesis; L-histidine from 5-phospho-alpha-D-ribose 1-diphosphate: step 6/9. This is Imidazoleglycerol-phosphate dehydratase from Nocardioides sp. (strain ATCC BAA-499 / JS614).